The following is a 101-amino-acid chain: Urease subunit beta (101 aa).

Belongs to the urease beta subunit family. As to quaternary structure, heterotrimer of UreA (gamma), UreB (beta) and UreC (alpha) subunits. Three heterotrimers associate to form the active enzyme.

The protein localises to the cytoplasm. It carries out the reaction urea + 2 H2O + H(+) = hydrogencarbonate + 2 NH4(+). It participates in nitrogen metabolism; urea degradation; CO(2) and NH(3) from urea (urease route): step 1/1. In Acaryochloris marina (strain MBIC 11017), this protein is Urease subunit beta.